A 65-amino-acid polypeptide reads, in one-letter code: Potassium channel toxin alpha-KTx 12.6 (65 aa).

An N-terminal signal peptide occupies residues 1–22 (MKMKIFIITIVIALFITSIVEA). 3 cysteine pairs are disulfide-bonded: C30–C51, C36–C56, and C40–C58.

This sequence belongs to the short scorpion toxin superfamily. Potassium channel inhibitor family. Alpha-KTx 12 subfamily. Expressed by the venom gland.

The protein localises to the secreted. Functionally, inhibits voltage-gated potassium channels. The protein is Potassium channel toxin alpha-KTx 12.6 of Lychas mucronatus (Chinese swimming scorpion).